Reading from the N-terminus, the 490-residue chain is Cytochrome P450 71D11 (490 aa).

C427 provides a ligand contact to heme.

This sequence belongs to the cytochrome P450 family. Heme is required as a cofactor.

The chain is Cytochrome P450 71D11 (CYP71D11) from Lotus japonicus (Lotus corniculatus var. japonicus).